We begin with the raw amino-acid sequence, 1072 residues long: DNA-directed RNA polymerase subunit beta (1072 aa).

The protein belongs to the RNA polymerase beta chain family. In plastids the minimal PEP RNA polymerase catalytic core is composed of four subunits: alpha, beta, beta', and beta''. When a (nuclear-encoded) sigma factor is associated with the core the holoenzyme is formed, which can initiate transcription.

The protein localises to the plastid. The protein resides in the chloroplast. The enzyme catalyses RNA(n) + a ribonucleoside 5'-triphosphate = RNA(n+1) + diphosphate. Functionally, DNA-dependent RNA polymerase catalyzes the transcription of DNA into RNA using the four ribonucleoside triphosphates as substrates. The chain is DNA-directed RNA polymerase subunit beta from Lemna minor (Common duckweed).